Consider the following 93-residue polypeptide: AVLDMDIRKCMPCGPRNKGHCFGPNICCGEELGCYFGTSETLRCQEENFLPTPCESGRKPCGNNEGSCAASGICCSNEGCMVDSSCDQEVMFP.

Intrachain disulfides connect Cys10–Cys54, Cys13–Cys27, Cys21–Cys44, Cys28–Cys34, Cys61–Cys74, Cys68–Cys86, and Cys75–Cys80.

The protein belongs to the vasopressin/oxytocin family.

Neurophysin 1 specifically binds oxytocin. The sequence is that of Neurophysin 1 from Struthio camelus (Common ostrich).